Consider the following 873-residue polypeptide: Tyrosine-protein kinase receptor TYRO3 (873 aa).

The signal sequence occupies residues 1–28; sequence MELRRSMALPRLLLLGLWAAALRDGAVA. Ig-like C2-type domains lie at 29–116 and 127–208; these read AGMK…KEES and PYFT…ATVQ. At 29–416 the chain is on the extracellular side; that stretch reads AGMKFTGSPI…QRQPPYGTSW (388 aa). Residue Asn51 is glycosylated (N-linked (GlcNAc...) asparagine). 2 disulfides stabilise this stretch: Cys52/Cys105 and Cys148/Cys191. Asn179, Asn184, Asn218, Asn228, Asn281, Asn353, and Asn367 each carry an N-linked (GlcNAc...) asparagine glycan. Fibronectin type-III domains follow at residues 215 to 308 and 310 to 403; these read PPLN…TLEL and PSST…AQEV. A helical membrane pass occupies residues 417–437; that stretch reads VPVALGILTALVTAVALALIL. Topologically, residues 438 to 873 are cytoplasmic; sequence LRKRRKETRF…ELETEGEKSC (436 aa). The Protein kinase domain maps to 505-776; sequence FTLGRMLGKG…GVLRSQLEMI (272 aa). ATP-binding positions include 511 to 519 and Lys537; that span reads LGKGEFGSV. Asp642 functions as the Proton acceptor in the catalytic mechanism. Residue Tyr673 is modified to Phosphotyrosine; by autocatalysis. The segment at 845-873 is disordered; sequence VEGERHPEGQEGENKSLLYELETEGEKSC. Over residues 847-858 the composition is skewed to basic and acidic residues; that stretch reads GERHPEGQEGEN.

Belongs to the protein kinase superfamily. Tyr protein kinase family. AXL/UFO subfamily. In terms of processing, autophosphorylated on tyrosine residues. As to expression, detected in embryonic retina (at protein level). detected in brain, retina, kidney and in retinal Mueller glia-like cells.

It is found in the cell membrane. The enzyme catalyses L-tyrosyl-[protein] + ATP = O-phospho-L-tyrosyl-[protein] + ADP + H(+). Functionally, receptor tyrosine kinase that transduces signals from the extracellular matrix into the cytoplasm by binding to several ligands. Regulates many physiological processes including cell survival, migration and differentiation. Ligand binding at the cell surface induces dimerization and autophosphorylation of TYRO3 on its intracellular domain that provides docking sites for downstream signaling molecules. Following activation by ligand, enhances PI3-kinase activity and activates the AKT survival pathway, including nuclear translocation of NF-kappa-B and up-regulation of transcription of NF-kappa-B-regulated genes. The polypeptide is Tyrosine-protein kinase receptor TYRO3 (TYRO3) (Gallus gallus (Chicken)).